Reading from the N-terminus, the 92-residue chain is Small ribosomal subunit protein uS19c (92 aa).

Belongs to the universal ribosomal protein uS19 family.

The protein localises to the plastid. It is found in the chloroplast. In terms of biological role, protein S19 forms a complex with S13 that binds strongly to the 16S ribosomal RNA. The polypeptide is Small ribosomal subunit protein uS19c (Pyropia yezoensis (Susabi-nori)).